Consider the following 452-residue polypeptide: Argininosuccinate lyase (452 aa).

The interval 431–452 is disordered; that stretch reads AFRKDSTGSTSPKWSFRAMRRA.

It belongs to the lyase 1 family. Argininosuccinate lyase subfamily.

The protein resides in the cytoplasm. It carries out the reaction 2-(N(omega)-L-arginino)succinate = fumarate + L-arginine. It participates in amino-acid biosynthesis; L-arginine biosynthesis; L-arginine from L-ornithine and carbamoyl phosphate: step 3/3. The polypeptide is Argininosuccinate lyase (Tremblaya princeps).